The sequence spans 728 residues: Putative auxin response factor 20 (728 aa).

The TF-B3 1 DNA-binding region spans 119 to 233 (FFEKQLSPAD…ELLVGVRRAP (115 aa)). Low complexity-rich tracts occupy residues 665–689 (PQGS…TTSA) and 700–712 (ASSS…IIPS). The segment at 665-728 (PQGSDEEAAA…IVNPRDGSQG (64 aa)) is disordered.

Belongs to the ARF family. Homo and heterodimers.

It localises to the nucleus. Its function is as follows. Auxin response factors (ARFs) are transcriptional factors that bind specifically to the DNA sequence 5'-TGTCTC-3' found in the auxin-responsive promoter elements (AuxREs). This Oryza sativa subsp. japonica (Rice) protein is Putative auxin response factor 20 (ARF20).